The chain runs to 681 residues: Potassium-transporting ATPase ATP-binding subunit (681 aa).

4 consecutive transmembrane segments (helical) span residues 30-50 (LLVY…FFGI), 59-79 (LAIA…EAIA), 216-236 (ILLV…LPFT), and 255-275 (IALL…SIGI). Aspartate 306 acts as the 4-aspartylphosphate intermediate in catalysis. ATP contacts are provided by residues aspartate 343, glutamate 347, 376–383 (FTATTRMS), and lysine 394. Aspartate 517 and aspartate 521 together coordinate Mg(2+). 3 consecutive transmembrane segments (helical) span residues 587–607 (FAII…LNLM), 615–635 (AILS…PLSL), and 661–681 (LIAP…LGIV).

This sequence belongs to the cation transport ATPase (P-type) (TC 3.A.3) family. Type IA subfamily. The system is composed of three essential subunits: KdpA, KdpB and KdpC.

It localises to the cell membrane. The enzyme catalyses K(+)(out) + ATP + H2O = K(+)(in) + ADP + phosphate + H(+). Part of the high-affinity ATP-driven potassium transport (or Kdp) system, which catalyzes the hydrolysis of ATP coupled with the electrogenic transport of potassium into the cytoplasm. This subunit is responsible for energy coupling to the transport system and for the release of the potassium ions to the cytoplasm. The chain is Potassium-transporting ATPase ATP-binding subunit from Listeria monocytogenes serotype 4b (strain CLIP80459).